The sequence spans 156 residues: uncharacterized protein (156 aa).

Residues 43–84 adopt a coiled-coil conformation; the sequence is LKIDENEVKLEISVEKLKNLSRVCENIEQVVDKVVEELRYAL.

This is an uncharacterized protein from Aquifex aeolicus (strain VF5).